A 113-amino-acid polypeptide reads, in one-letter code: Large ribosomal subunit protein uL22 (113 aa).

The protein belongs to the universal ribosomal protein uL22 family. As to quaternary structure, part of the 50S ribosomal subunit.

Its function is as follows. This protein binds specifically to 23S rRNA; its binding is stimulated by other ribosomal proteins, e.g. L4, L17, and L20. It is important during the early stages of 50S assembly. It makes multiple contacts with different domains of the 23S rRNA in the assembled 50S subunit and ribosome. Functionally, the globular domain of the protein is located near the polypeptide exit tunnel on the outside of the subunit, while an extended beta-hairpin is found that lines the wall of the exit tunnel in the center of the 70S ribosome. This chain is Large ribosomal subunit protein uL22, found in Magnetococcus marinus (strain ATCC BAA-1437 / JCM 17883 / MC-1).